Reading from the N-terminus, the 544-residue chain is Peptide chain release factor 3 (544 aa).

In terms of domain architecture, tr-type G spans Glu-17–Arg-286. GTP is bound by residues Ser-26–Thr-33, Asp-94–His-98, and Asn-148–Asp-151.

The protein belongs to the TRAFAC class translation factor GTPase superfamily. Classic translation factor GTPase family. PrfC subfamily.

It is found in the cytoplasm. Its function is as follows. Increases the formation of ribosomal termination complexes and stimulates activities of RF-1 and RF-2. It binds guanine nucleotides and has strong preference for UGA stop codons. It may interact directly with the ribosome. The stimulation of RF-1 and RF-2 is significantly reduced by GTP and GDP, but not by GMP. The polypeptide is Peptide chain release factor 3 (Microcystis aeruginosa (strain NIES-843 / IAM M-2473)).